The following is a 199-amino-acid chain: 3-isopropylmalate dehydratase small subunit (199 aa).

The protein belongs to the LeuD family. LeuD type 1 subfamily. In terms of assembly, heterodimer of LeuC and LeuD.

It catalyses the reaction (2R,3S)-3-isopropylmalate = (2S)-2-isopropylmalate. The protein operates within amino-acid biosynthesis; L-leucine biosynthesis; L-leucine from 3-methyl-2-oxobutanoate: step 2/4. In terms of biological role, catalyzes the isomerization between 2-isopropylmalate and 3-isopropylmalate, via the formation of 2-isopropylmaleate. The chain is 3-isopropylmalate dehydratase small subunit from Leifsonia xyli subsp. xyli (strain CTCB07).